Reading from the N-terminus, the 276-residue chain is Reaction center protein L chain (276 aa).

The next 3 helical transmembrane spans lie at 33–56 (GFFG…GAAL), 85–113 (GLWQ…RKLG), and 116–141 (YHIP…VMMG). 2 residues coordinate (7R,8Z)-bacteriochlorophyll b: histidine 154 and histidine 174. A helical transmembrane segment spans residues 171-200 (NPAHMLGITLFFTTCLALALHGSLILSAAN). Histidine 191 provides a ligand contact to Fe cation. Phenylalanine 217 serves as a coordination point for a ubiquinone. The helical transmembrane segment at 226–252 (GTLGIHRVGLILALSAVVWSIICMILS) threads the bilayer. Residue histidine 231 participates in Fe cation binding.

This sequence belongs to the reaction center PufL/M/PsbA/D family. Reaction center is composed of four bacteriochlorophylls, two bacteriopheophytins, two ubiquinones, one iron, and three highly hydrophobic polypeptide chains (designated L, M, and H).

The protein resides in the cellular chromatophore membrane. The reaction center is a membrane-bound complex that mediates the initial photochemical event in the electron transfer process of photosynthesis. The polypeptide is Reaction center protein L chain (pufL) (Rhodospirillum rubrum).